We begin with the raw amino-acid sequence, 553 residues long: Membrane protein insertase YidC (553 aa).

The next 5 membrane-spanning stretches (helical) occupy residues 7–24, 365–385, 435–455, 474–494, and 509–529; these read VLWVIFFMSAVMLYDNWQ, WGWAIVLLTLLIKAVFFPLSA, LPVVIQIPVFISLYWVLLASV, PYFILPVLMAVSMYVQTSLNP, and PIAFSVMFFFFPAGLVLYYVV.

It belongs to the OXA1/ALB3/YidC family. Type 1 subfamily. In terms of assembly, interacts with the Sec translocase complex via SecD. Specifically interacts with transmembrane segments of nascent integral membrane proteins during membrane integration.

The protein resides in the cell inner membrane. Required for the insertion and/or proper folding and/or complex formation of integral membrane proteins into the membrane. Involved in integration of membrane proteins that insert both dependently and independently of the Sec translocase complex, as well as at least some lipoproteins. Aids folding of multispanning membrane proteins. The polypeptide is Membrane protein insertase YidC (Burkholderia multivorans (strain ATCC 17616 / 249)).